The following is a 353-amino-acid chain: Terpene synthase 3 (353 aa).

Mg(2+)-binding residues include Asp-118, Asn-261, and Glu-269. Residues 118–122 (DDLLE) carry the D(D/E)XX(D/E) motif motif. Residues 261–269 (NDTFLLKKE) carry the NSE motif motif. Positions 342–349 (WCSKTTRY) match the WxxxxxRY motif motif.

Belongs to the terpene synthase family. It depends on Mg(2+) as a cofactor.

In terms of biological role, terpene synthase that may be involved in the production of volatile terpenoids. Does not show detectable terpene products with either farnesyl diphosphate (FPP) or geranyl diphosphate (GPP). P.polycephalum has a unique biology and these volatile terpenoids could function in internal communication of P.polycephalum, to mark the territory that have been explored, or they may be involved in chemotaxis. This Physarum polycephalum (Slime mold) protein is Terpene synthase 3.